The sequence spans 645 residues: Dictomallein-like protein (645 aa).

Residues 1 to 13 (MKLSMVMVLLVLA) form the signal peptide. The segment at 19 to 55 (CGGNDDNNSERTHESGDSNGDVTTPDNDASSNDEDDA) is disordered. The 272-residue stretch at 177–448 (PALHPELDLT…QRWVRNRARM (272 aa)) folds into the Peptidase M66 domain. Residue His-333 participates in Zn(2+) binding. The active site involves Glu-334. Zn(2+)-binding residues include His-337 and His-343.

Belongs to the dictomallein family. Zn(2+) is required as a cofactor.

The protein resides in the secreted. This is Dictomallein-like protein (dtmL) from Hahella chejuensis (strain KCTC 2396).